A 356-amino-acid polypeptide reads, in one-letter code: MSIILSLETSCDESAAALVSNEKGKIDLLANEIASQIDEHANWGGVVPEIASRRHLENLPFLIEEVFAKSTLQIKDIDAVAATVTPGLAGSLLVGSITARTLANLHQIPFLGIHHLEGHLSSIYLSENHPKPPFLVLLVSGGHTELIKVDVKHKYQRLGRSHDDAAGEAFDKVARLLGLSYPGGPAIQKIAKSGDPKKFLFPKGRVSKPEGGFYPYDFSFSGLKTAVFRQIEKIRSENKKLPIEDIAASFEYIVAEVLVERSFKCALDQGLNSLVLVGGVAANVRLREMMLAKASKNSIDITLAPMEFCTDNAAMIGAAALLRLSSEGFKSSMELGVSARWPLEKSDSLYDPIPPF.

Residues H115 and H119 each coordinate Fe cation. Substrate contacts are provided by residues L138 to G142, D171, G184, and N283. Position 311 (D311) interacts with Fe cation.

It belongs to the KAE1 / TsaD family. Fe(2+) is required as a cofactor.

It is found in the cytoplasm. It catalyses the reaction L-threonylcarbamoyladenylate + adenosine(37) in tRNA = N(6)-L-threonylcarbamoyladenosine(37) in tRNA + AMP + H(+). In terms of biological role, required for the formation of a threonylcarbamoyl group on adenosine at position 37 (t(6)A37) in tRNAs that read codons beginning with adenine. Is involved in the transfer of the threonylcarbamoyl moiety of threonylcarbamoyl-AMP (TC-AMP) to the N6 group of A37, together with TsaE and TsaB. TsaD likely plays a direct catalytic role in this reaction. In Prochlorococcus marinus (strain NATL1A), this protein is tRNA N6-adenosine threonylcarbamoyltransferase.